Here is a 257-residue protein sequence, read N- to C-terminus: Glutamate racemase (257 aa).

Residues 12-13 (DS) and 44-45 (YG) each bind substrate. Cysteine 75 functions as the Proton donor/acceptor in the catalytic mechanism. 76–77 (NT) serves as a coordination point for substrate. Residue cysteine 185 is the Proton donor/acceptor of the active site. 186–187 (TH) is a substrate binding site.

It belongs to the aspartate/glutamate racemases family.

The enzyme catalyses L-glutamate = D-glutamate. Its pathway is cell wall biogenesis; peptidoglycan biosynthesis. Provides the (R)-glutamate required for cell wall biosynthesis. The protein is Glutamate racemase of Clostridium botulinum (strain Okra / Type B1).